The primary structure comprises 160 residues: Baculoviral IAP repeat-containing protein 5.1-B (160 aa).

The stretch at 13–83 is one BIR repeat; it reads QRLQDFRNMY…EGWEPDDDPW (71 aa). Thr-43 carries the phosphothreonine; by CDK1 modification. The Zn(2+) site is built by Cys-66, Cys-69, His-86, and Cys-93.

This sequence belongs to the IAP family. As to quaternary structure, component of the CPC at least composed of survivin/birc5, incenp, cdca8/borealin and/or cdca9/dasra-A, and aurkb/aurora-B. Interacts directly with incenp (via N-terminus), and may weakly interact with aurkb (via N-terminus) to stabilize the complex. Interacts with GTP-bound ran in both the S and M phases of the cell cycle. Also found in a complex with ubiquitin-mediated signaling proteins including at least usp9x/xFAM, nploc4/npl4 and ufd1. Ubiquitination is required for centrosome-targeting.

The protein resides in the cytoplasm. It localises to the nucleus. The protein localises to the chromosome. It is found in the centromere. Its subcellular location is the cytoskeleton. The protein resides in the spindle. Its function is as follows. Component of the chromosomal passenger complex (CPC), a complex that acts as a key regulator of mitosis. The CPC complex has essential functions at the centromere in ensuring correct chromosome alignment and segregation and is required for chromatin-induced microtubule stabilization and spindle assembly. Stimulates the mitotic kinase activity of aurkb/aurora-B in the CPC. Does not appear to exhibit anti-apoptotic activity. CPC. Does not appear to exhibit anti-apoptotic activity. In Xenopus laevis (African clawed frog), this protein is Baculoviral IAP repeat-containing protein 5.1-B (birc5.1-b).